Reading from the N-terminus, the 180-residue chain is Large ribosomal subunit protein uL5 (180 aa).

The protein belongs to the universal ribosomal protein uL5 family. In terms of assembly, part of the 50S ribosomal subunit; part of the 5S rRNA/L5/L18/L25 subcomplex. Contacts the 5S rRNA and the P site tRNA. Forms a bridge to the 30S subunit in the 70S ribosome.

Its function is as follows. This is one of the proteins that bind and probably mediate the attachment of the 5S RNA into the large ribosomal subunit, where it forms part of the central protuberance. In the 70S ribosome it contacts protein S13 of the 30S subunit (bridge B1b), connecting the 2 subunits; this bridge is implicated in subunit movement. Contacts the P site tRNA; the 5S rRNA and some of its associated proteins might help stabilize positioning of ribosome-bound tRNAs. The polypeptide is Large ribosomal subunit protein uL5 (Cupriavidus metallidurans (strain ATCC 43123 / DSM 2839 / NBRC 102507 / CH34) (Ralstonia metallidurans)).